A 432-amino-acid polypeptide reads, in one-letter code: Pachytene checkpoint protein 2 homolog (432 aa).

N-acetylmethionine is present on Met1. Residue 179 to 186 (GPPGTGKT) coordinates ATP.

This sequence belongs to the AAA ATPase family. PCH2 subfamily. In terms of assembly, specifically interacts with the ligand binding domain of the thyroid receptor (TR). This interaction does not require the presence of thyroid hormone for its interaction. Interacts with HPV16 E1. Interacts with proteasome subunit PSMA8; to participate in meiosis progression during spermatogenesis.

Plays a key role in chromosome recombination and chromosome structure development during meiosis. Required at early steps in meiotic recombination that leads to non-crossovers pathways. Also needed for efficient completion of homologous synapsis by influencing crossover distribution along the chromosomes affecting both crossovers and non-crossovers pathways. Also required for development of higher-order chromosome structures and is needed for synaptonemal-complex formation. In males, required for efficient synapsis of the sex chromosomes and for sex body formation. Promotes early steps of the DNA double-strand breaks (DSBs) repair process upstream of the assembly of RAD51 complexes. Required for depletion of HORMAD1 and HORMAD2 from synapsed chromosomes. Plays a role in mitotic spindle assembly checkpoint (SAC) activation. This is Pachytene checkpoint protein 2 homolog (TRIP13) from Homo sapiens (Human).